We begin with the raw amino-acid sequence, 476 residues long: PTS system N-acetylmuramic acid-specific EIIBC component (476 aa).

The region spanning 1–89 is the PTS EIIB type-1 domain; it reads MATIDNAMIH…KASLGDNMSS (89 aa). The active-site Phosphocysteine intermediate; for EIIB activity is the cysteine 28. The PTS EIIC type-1 domain occupies 116–476; that stretch reads AKFATIFTPL…FFATKDVDLS (361 aa). 10 helical membrane passes run 118–138, 160–180, 186–206, 220–240, 265–285, 304–324, 337–357, 371–391, 396–416, and 443–463; these read FATIFTPLIPGFIGAGLLLGL, LIAYMKVFSKGLFSFLSILIG, AFGGSGVNGAILASLFILGYN, FFGLTIDPRGNIIGVLIAAIV, TLLIMGCFTFLFIMPIGVYLF, VLAGLFLISVMLGIHQGFVPV, LFPVLAMAGAGQVGAALALYF, GAIIPGFLGIGEPLIYGVTLP, FITACIGGAAGGFTIGLIAYL, and VLPAIATYLLGTVVAYATGFI.

The protein localises to the cell inner membrane. The catalysed reaction is N-acetyl-beta-D-muramate(out) + N(pros)-phospho-L-histidyl-[protein] = N-acetyl-beta-D-muramate 6-phosphate(in) + L-histidyl-[protein]. Functionally, the phosphoenolpyruvate-dependent sugar phosphotransferase system (sugar PTS), a major carbohydrate active transport system, catalyzes the phosphorylation of incoming sugar substrates concomitantly with their translocation across the cell membrane. This system is involved in N-acetylmuramic acid (MurNAc) transport, yielding cytoplasmic MurNAc-6-P. Is also able to take up anhydro-N-acetylmuramic acid (anhMurNAc), but cannot phosphorylate the carbon 6, probably because of the 1,6-anhydro ring. The sequence is that of PTS system N-acetylmuramic acid-specific EIIBC component (murP) from Pasteurella multocida (strain Pm70).